Reading from the N-terminus, the 213-residue chain is Ribonuclease HII (213 aa).

In terms of domain architecture, RNase H type-2 spans 25–213 (KTLCGVDEAG…FKPVKQLLPH (189 aa)). A divalent metal cation-binding residues include Asp-31, Glu-32, and Asp-124.

It belongs to the RNase HII family. Mn(2+) serves as cofactor. Requires Mg(2+) as cofactor.

Its subcellular location is the cytoplasm. The catalysed reaction is Endonucleolytic cleavage to 5'-phosphomonoester.. Its function is as follows. Endonuclease that specifically degrades the RNA of RNA-DNA hybrids. The protein is Ribonuclease HII of Magnetococcus marinus (strain ATCC BAA-1437 / JCM 17883 / MC-1).